A 118-amino-acid chain; its full sequence is Basic phospholipase A2 PA-12A (118 aa).

7 cysteine pairs are disulfide-bonded: Cys11–Cys71, Cys27–Cys117, Cys29–Cys45, Cys44–Cys98, Cys51–Cys91, Cys60–Cys84, and Cys78–Cys89. Residues Tyr28, Gly30, and Gly32 each contribute to the Ca(2+) site. Residue His48 is part of the active site. Asp49 provides a ligand contact to Ca(2+). The active site involves Asp92.

The protein belongs to the phospholipase A2 family. Group I subfamily. D49 sub-subfamily. The cofactor is Ca(2+). In terms of tissue distribution, expressed by the venom gland.

It is found in the secreted. It carries out the reaction a 1,2-diacyl-sn-glycero-3-phosphocholine + H2O = a 1-acyl-sn-glycero-3-phosphocholine + a fatty acid + H(+). Functionally, PLA2 catalyzes the calcium-dependent hydrolysis of the 2-acyl groups in 3-sn-phosphoglycerides. The chain is Basic phospholipase A2 PA-12A from Pseudechis australis (Mulga snake).